We begin with the raw amino-acid sequence, 162 residues long: MNCPDCGDEQTRVIDTETSADGTSVRRRRECQRCSFRFTTYERPEWDSLQVKKRNGTIEPFNRTKLRAGIERAVEKRDVSETTVTTLVDDIESALQDRETRLVSSSLIGELVSDRLRDLDKVAYIRFVSVYKAFSEPQEFLRELDAVLNAEIDDFEAPNDSQ.

The tract at residues Met-1–Asp-21 is disordered. A zinc finger spans residues Cys-3 to Cys-34. One can recognise an ATP-cone domain in the interval Leu-49 to Glu-139.

It belongs to the NrdR family. Zn(2+) is required as a cofactor.

Negatively regulates transcription of bacterial ribonucleotide reductase nrd genes and operons by binding to NrdR-boxes. In Halorubrum lacusprofundi (strain ATCC 49239 / DSM 5036 / JCM 8891 / ACAM 34), this protein is Transcriptional repressor NrdR.